Consider the following 137-residue polypeptide: Actin-depolymerizing factor 7 (137 aa).

Ser-6 carries the phosphoserine modification. Residues 7 to 137 (GMAVEDECKL…SFDIIKSRAL (131 aa)) form the ADF-H domain.

This sequence belongs to the actin-binding proteins ADF family. Specifically expressed in pollen.

The protein localises to the cytoplasm. Its subcellular location is the cytoskeleton. In terms of biological role, actin-depolymerizing protein. Severs actin filaments (F-actin) and binds to actin monomers. Binds monomeric actin (G-actin) with a marked preference for the ADP-loaded form and inhibits the rate of nucleotide exchange on G-actin. Required for pollen tube growth. Promotes turnover of longitudinal actin cables by severing actin filaments in pollen tubes. In Arabidopsis thaliana (Mouse-ear cress), this protein is Actin-depolymerizing factor 7 (ADF7).